A 136-amino-acid chain; its full sequence is NTDITSNGERVKCMQVWPPIGKKKFETLSYLPPLTRDQLLKEVEYLLRKGWVPCLEFELLKGFVYGEHNKSPRYYDGRYWTMWKLPMFGTTDPAQVVKEVDEVVAAYPEAFVRVIGFNNVRQVQCISFIAHTPESY.

The N-terminal 13 residues, 1 to 13 (NTDITSNGERVKC), are a transit peptide targeting the chloroplast.

Belongs to the RuBisCO small chain family. Heterohexadecamer of 8 large and 8 small subunits.

The protein localises to the plastid. Its subcellular location is the chloroplast. Functionally, ruBisCO catalyzes two reactions: the carboxylation of D-ribulose 1,5-bisphosphate, the primary event in carbon dioxide fixation, as well as the oxidative fragmentation of the pentose substrate. Both reactions occur simultaneously and in competition at the same active site. Although the small subunit is not catalytic it is essential for maximal activity. This is Ribulose bisphosphate carboxylase small subunit, chloroplastic 1 from Pisum sativum (Garden pea).